A 100-amino-acid polypeptide reads, in one-letter code: Urease subunit gamma (100 aa).

Belongs to the urease gamma subunit family. As to quaternary structure, heterotrimer of UreA (gamma), UreB (beta) and UreC (alpha) subunits. Three heterotrimers associate to form the active enzyme.

Its subcellular location is the cytoplasm. The catalysed reaction is urea + 2 H2O + H(+) = hydrogencarbonate + 2 NH4(+). It participates in nitrogen metabolism; urea degradation; CO(2) and NH(3) from urea (urease route): step 1/1. The chain is Urease subunit gamma from Rhodopseudomonas palustris (strain BisA53).